The following is a 321-amino-acid chain: Cytochrome c biogenesis protein CcsA (321 aa).

The next 8 helical transmembrane spans lie at 17–37 (IVSI…IVGL), 43–63 (KGMI…WIYS), 71–91 (LYES…VPKI), 98–118 (LSAI…SGLL), 143–163 (MVLS…LLVI), 225–245 (VISL…VWAN), 258–275 (ETWA…LHTR), and 286–306 (AIVA…VNLL).

The protein belongs to the CcmF/CycK/Ccl1/NrfE/CcsA family. May interact with Ccs1.

The protein resides in the plastid. The protein localises to the chloroplast thylakoid membrane. Its function is as follows. Required during biogenesis of c-type cytochromes (cytochrome c6 and cytochrome f) at the step of heme attachment. This chain is Cytochrome c biogenesis protein CcsA, found in Platanus occidentalis (Sycamore).